The following is a 743-amino-acid chain: Elongation factor 2 (743 aa).

Positions 19 to 265 (NNIRNIGIIA…MVVRHLPSPK (247 aa)) constitute a tr-type G domain. GTP-binding positions include 28-35 (AHIHHGKT), 94-98 (DTPGH), and 148-151 (NKVD). His-615 bears the Diphthamide mark.

Belongs to the TRAFAC class translation factor GTPase superfamily. Classic translation factor GTPase family. EF-G/EF-2 subfamily.

It is found in the cytoplasm. Functionally, catalyzes the GTP-dependent ribosomal translocation step during translation elongation. During this step, the ribosome changes from the pre-translocational (PRE) to the post-translocational (POST) state as the newly formed A-site-bound peptidyl-tRNA and P-site-bound deacylated tRNA move to the P and E sites, respectively. Catalyzes the coordinated movement of the two tRNA molecules, the mRNA and conformational changes in the ribosome. The polypeptide is Elongation factor 2 (Nanoarchaeum equitans (strain Kin4-M)).